The sequence spans 54 residues: Small ribosomal subunit protein uS14 (54 aa).

Residues cysteine 19, cysteine 22, cysteine 37, and cysteine 40 each coordinate Zn(2+).

Belongs to the universal ribosomal protein uS14 family. Zinc-binding uS14 subfamily. In terms of assembly, part of the 30S ribosomal subunit. It depends on Zn(2+) as a cofactor.

Binds 16S rRNA, required for the assembly of 30S particles. In Sulfurisphaera tokodaii (strain DSM 16993 / JCM 10545 / NBRC 100140 / 7) (Sulfolobus tokodaii), this protein is Small ribosomal subunit protein uS14.